The sequence spans 397 residues: Neuroplastin (397 aa).

The signal sequence occupies residues 1-28; that stretch reads MSGSSLPGALALSLLLVSGSLLPGPGAA. Ig-like domains follow at residues 29–134, 148–234, and 237–327; these read QNAG…PSIT, PRIV…IEVK, and PDIT…ASVS. Topologically, residues 29-338 are extracellular; it reads QNAGFVKSPM…VLRVRSHLAP (310 aa). The cysteines at positions 52 and 116 are disulfide-linked. The narpin; mediates binding with FGFR1 and has antidepressant-like activity stretch occupies residues 149-161; sequence RIVTSEEVIIRES. Cysteines 169 and 217 form a disulfide. N-linked (GlcNAc...) asparagine glycosylation is found at Asn170, Asn196, Asn228, Asn283, Asn295, and Asn316. The cysteines at positions 258 and 315 are disulfide-linked. The chain crosses the membrane as a helical span at residues 339–359; it reads LWPFLGILAEIIILVVIIVVY. Over 360–397 the chain is Cytoplasmic; that stretch reads EKRKRPDEVPDDDEPAGPMKTNSTNNHKDKNLRQRNTN. Residues 364–397 are disordered; sequence RPDEVPDDDEPAGPMKTNSTNNHKDKNLRQRNTN.

In terms of assembly, interacts with ATP2B1; this interaction stabilizes ATP2B1 and increases ATPase activity; this interaction controls T cell calcium homeostasis following T cell activation. Interacts with XKR8; promoting its localization at the cell membrane. N-glycosylated. As to expression, isoform 1 and isoform 2 are widely expressed with variable levels in brain. Isoform 1 is expressed in cerebellum and midbrain. Isoform 1 and isoform 2 are expressed in cerebral cortex, hippocampus and striatum. Isoform 2 is more abundant in the cerebral cortex than isoform 1.

It is found in the cell membrane. It localises to the postsynaptic density. In terms of biological role, probable homophilic and heterophilic cell adhesion molecule involved in long term potentiation at hippocampal excitatory synapses through activation of p38MAPK. May also regulate neurite outgrowth by activating the FGFR1 signaling pathway. May play a role in synaptic plasticity. Also acts as a chaperone for ATP2B1; stabilizes ATP2B1 and increases its ATPase activity. Promotes localization of XKR8 at the cell membrane. This is Neuroplastin (Nptn) from Mus musculus (Mouse).